Consider the following 336-residue polypeptide: MPVLNLNDPQAVERYEEFMRQSPYGQVTQDLGWAKVKNNWEPVDVYLEDDQGAIIAAMSMLLGDTPTDKKFAYASKGPVMDVTDVDLLDRLVDEAVKALDGRAYVLRFDPEVAYSDEFNTTLQDHGYVTRNRNVADAGMHATIQPRLNMVLDLTKFPDAKTTLDLYPSKTKSKIKRPFRDGVEVHSGNSATELDEFFKTYTTMAERHGITHRPIEYFQRMQAAFDADTMRIFVAEREGKLLSTGIALKYGRKIWYMYAGSMDGNTYYAPYAVQSEMIQWALDTNTDLYDLGGIESESTDDSLYVFKHVFVKDAPREYIGEIDKVLDPEVYAELVKD.

Substrate-binding positions include 37–40, tyrosine 104, arginine 212, tyrosine 216, and tyrosine 257; that span reads KNNW.

The protein belongs to the FemABX family.

The catalysed reaction is UDP-N-acetyl-alpha-D-muramoyl-L-alanyl-gamma-D-glutamyl-L-lysyl-D-alanyl-D-alanine + L-alanyl-tRNA(Ala) = UDP-N-acetyl-alpha-D-muramoyl-L-alanyl-gamma-D-glutamyl-N(6)-(L-alanyl)-L-lysyl-D-alanyl-D-alanine + tRNA(Ala) + H(+). Its function is as follows. Involved in the synthesis of the bacterial cell wall. Catalyzes the addition of alanine into the interchain peptide bridge of peptidoglycan precursor using aminoacyl-tRNA(Ala) as amino acid donor. This alanine is added to the epsilon-amino group of the L-lysine of the peptidoglycan UDP-N-acetyl-alpha-D-muramoyl-L-alanyl-D-glutamyl-L-lysyl-D-alanyl-D-alanine, in a ribosome-independent mechanism. Specific for UDP-N-acetyl-muramoyl-pentapeptide. Has no activity toward UDP-N-acetyl-muramoyl-tetrapeptide or UDP-N-acetyl-muramoyl-tripeptide. Also acts on L-seryl-tRNA(Ser). The chain is UDP-N-acetylmuramoylpentapeptide-lysine N(6)-alanyltransferase from Weissella viridescens (Lactobacillus viridescens).